A 587-amino-acid chain; its full sequence is Chaperonin GroEL 1 (587 aa).

Residues 29–32 (TIGP), 86–90 (DGTTT), Gly-413, and Asp-492 each bind ATP.

It belongs to the chaperonin (HSP60) family. In terms of assembly, forms a cylinder of 14 subunits composed of two heptameric rings stacked back-to-back. Interacts with the co-chaperonin GroES.

Its subcellular location is the cytoplasm. It carries out the reaction ATP + H2O + a folded polypeptide = ADP + phosphate + an unfolded polypeptide.. Its function is as follows. Together with its co-chaperonin GroES, plays an essential role in assisting protein folding. The GroEL-GroES system forms a nano-cage that allows encapsulation of the non-native substrate proteins and provides a physical environment optimized to promote and accelerate protein folding. The sequence is that of Chaperonin GroEL 1 from Prochlorococcus marinus (strain MIT 9515).